The primary structure comprises 194 residues: Adenylate kinase (194 aa).

An ATP-binding site is contributed by 10-15 (GAGKGT). Residues 30–59 (STGDMLRAAVAAGTPVGLKAKAVMESGGLV) are NMP. Residues threonine 31, arginine 36, 57-59 (GLV), 85-88 (GFPR), and glutamine 92 contribute to the AMP site. The interval 126 to 142 (NRAAEAKAKGEPVRKDD) is LID. Arginine 127 provides a ligand contact to ATP. 2 residues coordinate AMP: arginine 139 and arginine 150. Alanine 178 provides a ligand contact to ATP.

It belongs to the adenylate kinase family. In terms of assembly, monomer.

The protein localises to the cytoplasm. The enzyme catalyses AMP + ATP = 2 ADP. The protein operates within purine metabolism; AMP biosynthesis via salvage pathway; AMP from ADP: step 1/1. In terms of biological role, catalyzes the reversible transfer of the terminal phosphate group between ATP and AMP. Plays an important role in cellular energy homeostasis and in adenine nucleotide metabolism. In Azorhizobium caulinodans (strain ATCC 43989 / DSM 5975 / JCM 20966 / LMG 6465 / NBRC 14845 / NCIMB 13405 / ORS 571), this protein is Adenylate kinase.